Consider the following 174-residue polypeptide: Endoribonuclease YbeY (174 aa).

Positions 129, 133, and 139 each coordinate Zn(2+).

The protein belongs to the endoribonuclease YbeY family. Requires Zn(2+) as cofactor.

It localises to the cytoplasm. In terms of biological role, single strand-specific metallo-endoribonuclease involved in late-stage 70S ribosome quality control and in maturation of the 3' terminus of the 16S rRNA. This chain is Endoribonuclease YbeY, found in Lactobacillus delbrueckii subsp. bulgaricus (strain ATCC BAA-365 / Lb-18).